A 90-amino-acid polypeptide reads, in one-letter code: UPF0367 protein P9301_01411 (90 aa).

The protein belongs to the UPF0367 family.

This Prochlorococcus marinus (strain MIT 9301) protein is UPF0367 protein P9301_01411.